The chain runs to 209 residues: Prolactin (209 aa).

An N-terminal signal peptide occupies residues 1-24 (MAQRFKGRSLFLTALLCLASQGYA). Cystine bridges form between Cys70–Cys184 and Cys201–Cys209.

It belongs to the somatotropin/prolactin family.

The protein localises to the secreted. The chain is Prolactin (prl) from Anguilla anguilla (European freshwater eel).